Here is a 1017-residue protein sequence, read N- to C-terminus: GPI ethanolamine phosphate transferase 3 (1017 aa).

Residues 34 to 54 (FYIILLVFIAILQFISIAFFT) form a helical membrane-spanning segment. N-linked (GlcNAc...) asparagine glycosylation is found at Asn66, Asn71, Asn100, Asn182, and Asn203. The helical transmembrane segment at 347–367 (VSSLALLMGQPIPFNNLGWPI) threads the bilayer. Asn411 carries N-linked (GlcNAc...) asparagine glycosylation. Helical transmembrane passes span 457 to 477 (LLAT…SIVV), 484 to 504 (FVPG…GIFY), 515 to 535 (FWGT…ITIF), 558 to 578 (IAVM…FTIW), 582 to 602 (IVAF…VFLP), and 644 to 664 (LGGY…MITI). Asn681 and Asn682 each carry an N-linked (GlcNAc...) asparagine glycan. The chain crosses the membrane as a helical span at residues 685–705 (WWVLGLCFLMIFILPACITGY). Asn707 carries N-linked (GlcNAc...) asparagine glycosylation. Residues 715-735 (AAPIWINVFLKGILGLNFVYW) traverse the membrane as a helical segment. N-linked (GlcNAc...) asparagine glycosylation is present at Asn742. 6 consecutive transmembrane segments (helical) span residues 765–785 (IIAG…PLCI), 806–826 (NIYG…ILLF), 829–849 (PLAQ…LEII), 903–923 (IAII…VALL), 947–967 (GILL…VTHF), and 981–1001 (FIFA…GTIA).

The protein belongs to the PIGG/PIGN/PIGO family. PIGO subfamily. In terms of processing, glycosylated.

It is found in the endoplasmic reticulum membrane. It functions in the pathway glycolipid biosynthesis; glycosylphosphatidylinositol-anchor biosynthesis. Its function is as follows. Involved in glycosylphosphatidylinositol-anchor biosynthesis. Transfers ethanolamine phosphate to the GPI third mannose which links the GPI-anchor to the C-terminus of the proteins by an amide bond. Involved in cell wall biosynthesis. The polypeptide is GPI ethanolamine phosphate transferase 3 (GPI13) (Saccharomyces cerevisiae (strain ATCC 204508 / S288c) (Baker's yeast)).